Reading from the N-terminus, the 255-residue chain is Small ribosomal subunit protein eS1 (255 aa).

Position 2 is an N-acetylalanine; partial (Ala2).

It belongs to the eukaryotic ribosomal protein eS1 family. As to quaternary structure, component of the small ribosomal subunit. Mature ribosomes consist of a small (40S) and a large (60S) subunit. The 40S subunit contains about 33 different proteins and 1 molecule of RNA (18S). The 60S subunit contains about 49 different proteins and 3 molecules of RNA (25S, 5.8S and 5S).

Its subcellular location is the cytoplasm. The polypeptide is Small ribosomal subunit protein eS1 (Vanderwaltozyma polyspora (strain ATCC 22028 / DSM 70294 / BCRC 21397 / CBS 2163 / NBRC 10782 / NRRL Y-8283 / UCD 57-17) (Kluyveromyces polysporus)).